A 117-amino-acid polypeptide reads, in one-letter code: Large ribosomal subunit protein uL18 (117 aa).

The protein belongs to the universal ribosomal protein uL18 family. In terms of assembly, part of the 50S ribosomal subunit; part of the 5S rRNA/L5/L18/L25 subcomplex. Contacts the 5S and 23S rRNAs.

Functionally, this is one of the proteins that bind and probably mediate the attachment of the 5S RNA into the large ribosomal subunit, where it forms part of the central protuberance. This chain is Large ribosomal subunit protein uL18, found in Vibrio campbellii (strain ATCC BAA-1116).